The sequence spans 758 residues: Dachshund homolog 1 (758 aa).

Disordered stretches follow at residues 1–105 and 134–185; these read MAVP…SNCN and INAS…TPQN. Residues 20 to 53 show a composition bias toward low complexity; it reads ISTSASSSGTTTSTSSATSSPAPSIGPPASSGPT. Positions 73–102 are enriched in gly residues; that stretch reads TGGGGGGGGSGGGGGSSGNGGGGGGGGGGS. Over residues 140-163 the composition is skewed to low complexity; that stretch reads SSSSSSSSSSSSSSSSSSSSSSSS. A compositionally biased stretch (polar residues) spans 174–185; it reads STPSPVENTPQN. The segment at 189 to 275 is DACHbox-N; sequence KMVDLRGAKV…LISRKDFETL (87 aa). The tract at residues 189–384 is interaction with SIX6 and HDAC3; sequence KMVDLRGAKV…VGSSDGSWDK (196 aa). Disordered stretches follow at residues 280–302, 358–414, 474–532, and 544–564; these read TNAS…PENS, SNNQ…PLSH, SPPS…RIPV, and MGLS…GHDM. Polar residues-rich tracts occupy residues 292–301, 358–380, and 387–399; these read RTQSVTSPEN, SNNQ…SSDG, and LPSS…QASI. Serine 491 carries the phosphoserine modification. The segment covering 506-524 has biased composition (low complexity); that stretch reads SHPSSHRSSSVSSSPARTE. Positions 555 to 564 are enriched in basic and acidic residues; it reads KEGDLAGHDM. Residues 616–696 form a DACHbox-C region; it reads SSIETLLTNI…KAKRKLQEAL (81 aa). Residues 627–706 form an interaction with SIN3A region; that stretch reads GLLKVAIDNA…EFETKRREQA (80 aa). Residues 630-718 are a coiled coil; sequence KVAIDNARAQ…TLKQAASTDS (89 aa).

This sequence belongs to the DACH/dachshund family. In terms of assembly, interacts with SIX1, SIX6 and EYA3. Interacts with NCOR1 and HDAC3 through its N-terminus. Interacts with SIN3A through its C-terminus. Interacts with SMAD3 and SMAD4. As to expression, widely expressed. Isoform 2 is found in brain, heart, kidney, liver, leukocytes and spleen. Isoform 3 is found in liver and heart. Isoform 4 is found in spleen.

Its subcellular location is the nucleus. Transcription factor that is involved in regulation of organogenesis. Seems to be a regulator of SIX1, SIX6 and probably SIX5. Corepression of precursor cell proliferation in myoblasts by SIX1 is switched to coactivation through recruitment of EYA3 to the SIX1-DACH1 complex. Transcriptional activation also seems to involve association of CREBBP. Seems to act as a corepressor of SIX6 in regulating proliferation by directly repressing cyclin-dependent kinase inhibitors, including the p27Kip1 promoter. Inhibits TGF-beta signaling through interaction with SMAD4 and NCOR1. Binds to chromatin DNA via its DACHbox-N domain. This chain is Dachshund homolog 1 (DACH1), found in Homo sapiens (Human).